We begin with the raw amino-acid sequence, 466 residues long: UDP-N-acetylmuramoylalanine--D-glutamate ligase (466 aa).

Residue 117 to 123 (GTKGKTT) coordinates ATP.

It belongs to the MurCDEF family.

It localises to the cytoplasm. It carries out the reaction UDP-N-acetyl-alpha-D-muramoyl-L-alanine + D-glutamate + ATP = UDP-N-acetyl-alpha-D-muramoyl-L-alanyl-D-glutamate + ADP + phosphate + H(+). The protein operates within cell wall biogenesis; peptidoglycan biosynthesis. Functionally, cell wall formation. Catalyzes the addition of glutamate to the nucleotide precursor UDP-N-acetylmuramoyl-L-alanine (UMA). This chain is UDP-N-acetylmuramoylalanine--D-glutamate ligase, found in Roseiflexus sp. (strain RS-1).